Here is a 1649-residue protein sequence, read N- to C-terminus: MGSTFKREIAKVTVKVASPEVIRSWSSGEVKKPETINYRTFKPEKDGLFCEKIFGPTKDYECACGKYKGKKYEGTVCERCGVRVESKEARRRRMGHIDLVAPVVHVWYLKSSPSILSSLLGIPAKELENVVYYGGKRIIEKILIVTDPKNTDFIKGSQLYQTEYEIYSQKLDFEVVPGVIIKSPSTPVTSSISGEVKIRHEKTHTDREITWVDVRKISRAEHRLYTGMILNVKNGDKVNQGDEIVSEMQIDPIYAPFDGTVEIDEISESITVRPLSTSKDIPVTFSLPYGVKPTVSNGAKVKKGDQLTNGTVLPAVVASVSGTISFGKDLNVRPREDGKYEVLKNGTLFVENVVEEKHYPLFEGALIYVEDGQEINEGDVIADRFLFEDEYLTIDEFKIFEEHYPAMFTAESEVENDRPIVVITKIDDEVSVETGLKIGDIITDDQYWAYRVLYGEKIEADSGAAAIKKLLQNLDLEKLKAEIEAELKKVSKSSGRAKKLLRRLKIVKDLLKSETKPEWMVLEAIPVVPPDIRPMIQVEGGRFATTDLNDLYRRVINRNNRLKKLYEMNSPEIIIKNEKRMLQEAVDSLIYNGRMGKAVTDRNGRPLKSLTDLLKGKKGRFRRNLLGKRVDYSGRAVIVVGPHLKIHECGLPKKMAMELFKPFVLAELLNKDDETSKTARKMKKAIIEKELPQAYEVLEEIIKGHPVLLNRAPTLHRMSLQAFEPRLIEGNAIQLHPLVCPPFNADFDGDQMAVHVPLSAAAQAEAKFLMLSRYNIISPAHGKPISMPGKDIVAGVYYLTMVDKNFDSVKEKDIKWKFSSIEEAGLAYEFGYIKLHDPILVKVDDKVIKTTYGRLIFASIVPDEFKDYNKTYGKGAIKDLVYNTFKKYGVDRTADLLDDIKDLGFHYATISGLTVSITDFYISPEREKIIEQAKAKVSEIEELFAEGFLSDEERYRETIKIWADATEKVQDATFEYIGKDPFNPIYIMVDSGARGNKDQLKQLAGMRGLMADPSGRTIEIPIISNFREGLSVLEFFISTHGARKGSADTALRTSSAGYLTRRLVDVAQSVVVTTTDCGTHNGVRATVLKSSDGLTVEKLEDFLFGRVLAKDVFDPKTNNVLVNPETGKQYTRDTIIDDDDAKFLGNYSVRIPVVTEGEIDLSSPELPESYCELAEDFVYNDVHYEVGTEVNWDVVRKATSAGLSKLKVKIYPVVGKVSVETVLSSKDSKQLVVDEELIEVTTAKILEENNVESVQVRPEIIVRSVLTCEAEHGVCSKCYGMDLSNHQIVGVGESVGVVAAQSIGEPGTQLTMRTFHTGGIATTADITQGLPRAEELFEARKKLKEPEGVFSRVKGYVKDIVEDETGRKKVYIEDEAGDIHEYEIPIKVKVAVNKGQKVLPGQSLSTGAIRPRKILETLDVDATALYLLKEIKKVYVEQGVDIHDKHFEIIIKQMLDKVEVVDPGDTDYLPGDLVRLETVKRINKEILESNVQVDSNRKRVIGKELHHHLIAEDENGQIVEIAKEGEEVTEEILEKAIKLGIKDLVVKNGEGEIVTYQILPKEPIKYRRRLLRITKASLERVGWLSAASFQQTPQVLTEAAIEGAEDLLLGLKENVIVGQLIPAGTGLDMFANIQIEETPRFAQEKEKMA.

Cys-62, Cys-64, Cys-77, and Cys-80 together coordinate Zn(2+). Mg(2+) is bound by residues Asp-746, Asp-748, and Asp-750. Residues Cys-1077, Cys-1268, Cys-1275, and Cys-1278 each coordinate Zn(2+).

It belongs to the RNA polymerase beta' chain family. As to quaternary structure, the RNAP catalytic core consists of 2 alpha, 1 beta, 1 beta' and 1 omega subunit. When a sigma factor is associated with the core the holoenzyme is formed, which can initiate transcription. Requires Mg(2+) as cofactor. Zn(2+) is required as a cofactor.

It carries out the reaction RNA(n) + a ribonucleoside 5'-triphosphate = RNA(n+1) + diphosphate. Its function is as follows. DNA-dependent RNA polymerase catalyzes the transcription of DNA into RNA using the four ribonucleoside triphosphates as substrates. The sequence is that of DNA-directed RNA polymerase subunit beta' from Thermosipho africanus (strain TCF52B).